A 376-amino-acid polypeptide reads, in one-letter code: Glucose-1-phosphate adenylyltransferase (376 aa).

Residues Tyr101, Gly166, 181–182, and Ser192 contribute to the alpha-D-glucose 1-phosphate site; that span reads EK.

The protein belongs to the bacterial/plant glucose-1-phosphate adenylyltransferase family. In terms of assembly, homotetramer.

It catalyses the reaction alpha-D-glucose 1-phosphate + ATP + H(+) = ADP-alpha-D-glucose + diphosphate. The protein operates within glycan biosynthesis; glycogen biosynthesis. Involved in the biosynthesis of ADP-glucose, a building block required for the elongation reactions to produce glycogen. Catalyzes the reaction between ATP and alpha-D-glucose 1-phosphate (G1P) to produce pyrophosphate and ADP-Glc. In Bacillus thuringiensis (strain Al Hakam), this protein is Glucose-1-phosphate adenylyltransferase.